Reading from the N-terminus, the 122-residue chain is Serum amyloid A-1 protein (122 aa).

Positions 1-19 (MKLLTSLVFCSLLLGVCHG) are cleaved as a signal peptide. The important for amyloid formation stretch occupies residues 20 to 45 (GFFSFVHEAFQGAGDMWRAYTDMKEA). Basic and acidic residues predominate over residues 91-108 (HEDTIADQEANRHGRSGK). The tract at residues 91-122 (HEDTIADQEANRHGRSGKDPNYYRPPGLPDKY) is disordered.

Belongs to the SAA family. In terms of assembly, homohexamer; dimer of trimers. Can form amyloid fibrils after partial proteolysis; the native, undenatured protein does not form amyloid fibrils (in vitro). Apolipoprotein of the HDL complex. Binds to heparin. As to expression, detected in blood plasma (at protein level). Detected in liver.

It is found in the secreted. Its function is as follows. Major acute phase protein. This Mus musculus (Mouse) protein is Serum amyloid A-1 protein (Saa1).